The sequence spans 267 residues: NAD-capped RNA hydrolase NudC (267 aa).

Residue Arg-70 coordinates substrate. Zn(2+)-binding residues include Cys-99 and Cys-102. Glu-112 is a binding site for substrate. Residues Cys-117 and Cys-122 each contribute to the Zn(2+) site. Tyr-127 lines the substrate pocket. The Nudix hydrolase domain occupies 128–257 (PVICPSIIVA…TIARALIEAT (130 aa)). Residues Ala-166, Glu-182, and Glu-186 each contribute to the a divalent metal cation site. Residues 167–188 (GFVEVGESFEQTIHREVFEETG) carry the Nudix box motif. A substrate-binding site is contributed by 200–207 (QPWAFPNS). An a divalent metal cation-binding site is contributed by Glu-227. Ala-250 contacts substrate.

The protein belongs to the Nudix hydrolase family. NudC subfamily. In terms of assembly, homodimer. Requires Mg(2+) as cofactor. The cofactor is Mn(2+). It depends on Zn(2+) as a cofactor.

It catalyses the reaction a 5'-end NAD(+)-phospho-ribonucleoside in mRNA + H2O = a 5'-end phospho-adenosine-phospho-ribonucleoside in mRNA + beta-nicotinamide D-ribonucleotide + 2 H(+). It carries out the reaction NAD(+) + H2O = beta-nicotinamide D-ribonucleotide + AMP + 2 H(+). The enzyme catalyses NADH + H2O = reduced beta-nicotinamide D-ribonucleotide + AMP + 2 H(+). Functionally, mRNA decapping enzyme that specifically removes the nicotinamide adenine dinucleotide (NAD) cap from a subset of mRNAs by hydrolyzing the diphosphate linkage to produce nicotinamide mononucleotide (NMN) and 5' monophosphate mRNA. The NAD-cap is present at the 5'-end of some mRNAs and stabilizes RNA against 5'-processing. Has preference for mRNAs with a 5'-end purine. Catalyzes the hydrolysis of a broad range of dinucleotide pyrophosphates. In Mannheimia succiniciproducens (strain KCTC 0769BP / MBEL55E), this protein is NAD-capped RNA hydrolase NudC.